We begin with the raw amino-acid sequence, 223 residues long: Translation initiation factor 6 (223 aa).

It belongs to the eIF-6 family.

Its function is as follows. Binds to the 50S ribosomal subunit and prevents its association with the 30S ribosomal subunit to form the 70S initiation complex. In Saccharolobus islandicus (strain Y.N.15.51 / Yellowstone #2) (Sulfolobus islandicus), this protein is Translation initiation factor 6.